A 521-amino-acid polypeptide reads, in one-letter code: Glucosidase 2 subunit beta (521 aa).

A signal peptide spans 1–14; the sequence is MLLLLLLLLPLCWA. A Phosphoserine modification is found at serine 24. LDL-receptor class A domains lie at 37 to 71 and 69 to 113; these read FTCL…AACP and ACPN…TVCE. Intrachain disulfides connect cysteine 39–cysteine 58 and cysteine 56–cysteine 70. Position 49 (aspartate 49) interacts with substrate. Residues glutamine 50, aspartate 53, tyrosine 55, aspartate 57, aspartate 63, and glutamate 64 each coordinate Ca(2+). Aspartate 53 provides a ligand contact to substrate. N-linked (GlcNAc...) asparagine glycosylation is present at asparagine 72. Disulfide bonds link cysteine 77–cysteine 99, cysteine 97–cysteine 112, and cysteine 100–cysteine 116. At serine 89 the chain carries Phosphoserine; by PKC. Ca(2+) is bound by residues arginine 91, aspartate 94, valine 96, aspartate 98, aspartate 104, and glutamate 105. The residue at position 166 (lysine 166) is an N6-succinyllysine. Phosphoserine is present on serine 168. EF-hand domains follow at residues 209–244 and 245–290; these read REQE…DTDG and DGAL…TDIP. Residues aspartate 222, asparagine 224, aspartate 226, methionine 228, and glutamate 233 each contribute to the Ca(2+) site. Disordered regions lie at residues 226–267 and 280–350; these read DGMV…DTTS and YRSE…EKMP. Composition is skewed to acidic residues over residues 241-253 and 308-331; these read DTDG…EEEA and TEEE…EEEA. Residues 332 to 343 are compositionally biased toward pro residues; the sequence is PPPLQPPQPPSP. Phosphoserine; by PKC occurs at positions 376 and 383. One can recognise an MRH domain in the interval 406–507; it reads SQCYELTTNE…ELMTPAACPE (102 aa). Cysteine 408 and cysteine 421 are disulfide-bonded. Serine 427 carries the phosphoserine; by PKC modification. 2 disulfide bridges follow: cysteine 464–cysteine 493 and cysteine 478–cysteine 505. N-linked (GlcNAc...) asparagine glycosylation is present at asparagine 469. A Prevents secretion from ER motif is present at residues 518–521; it reads HDEL.

As to quaternary structure, heterodimer of a catalytic alpha subunit (GANAB) and a beta subunit (PRKCSH). Binds glycosylated PTPRC. As to expression, expressed in kidney (at protein level).

The protein localises to the endoplasmic reticulum. The protein operates within glycan metabolism; N-glycan metabolism. In terms of biological role, regulatory subunit of glucosidase II that cleaves sequentially the 2 innermost alpha-1,3-linked glucose residues from the Glc(2)Man(9)GlcNAc(2) oligosaccharide precursor of immature glycoproteins. Required for efficient PKD1/Polycystin-1 biogenesis and trafficking to the plasma membrane of the primary cilia. This chain is Glucosidase 2 subunit beta, found in Mus musculus (Mouse).